Consider the following 446-residue polypeptide: Deoxyguanosinetriphosphate triphosphohydrolase-like protein (446 aa).

Positions 1-28 (MSSSVWQERRHGEDKQRRNDHRSPFQRD) are disordered. Residues 7 to 28 (QERRHGEDKQRRNDHRSPFQRD) show a composition bias toward basic and acidic residues. The 194-residue stretch at 59 to 252 (RLTHSLEVSQ…MELADDIAYA (194 aa)) folds into the HD domain.

It belongs to the dGTPase family. Type 2 subfamily.

The protein is Deoxyguanosinetriphosphate triphosphohydrolase-like protein of Shewanella sp. (strain MR-7).